The primary structure comprises 293 residues: 4-hydroxy-tetrahydrodipicolinate synthase (293 aa).

Threonine 45 contributes to the pyruvate binding site. The active-site Proton donor/acceptor is the tyrosine 133. Catalysis depends on lysine 161, which acts as the Schiff-base intermediate with substrate. Isoleucine 203 is a pyruvate binding site.

It belongs to the DapA family. Homotetramer; dimer of dimers.

The protein resides in the cytoplasm. The catalysed reaction is L-aspartate 4-semialdehyde + pyruvate = (2S,4S)-4-hydroxy-2,3,4,5-tetrahydrodipicolinate + H2O + H(+). Its pathway is amino-acid biosynthesis; L-lysine biosynthesis via DAP pathway; (S)-tetrahydrodipicolinate from L-aspartate: step 3/4. Functionally, catalyzes the condensation of (S)-aspartate-beta-semialdehyde [(S)-ASA] and pyruvate to 4-hydroxy-tetrahydrodipicolinate (HTPA). The polypeptide is 4-hydroxy-tetrahydrodipicolinate synthase (Shewanella denitrificans (strain OS217 / ATCC BAA-1090 / DSM 15013)).